Here is a 293-residue protein sequence, read N- to C-terminus: Extracellular metalloprotease MGYG_00389 (293 aa).

The signal sequence occupies residues 1-19 (MRFSVFLPAIAALSSAVAA). N-linked (GlcNAc...) asparagine glycosylation is found at Asn49 and Asn53. His184 is a binding site for Zn(2+). The active site involves Glu185. His188 is a Zn(2+) binding site. Cys223 and Cys249 are joined by a disulfide. The tract at residues 270-293 (GSGSGSVTRPRPKPPVLMDYEHRL) is disordered.

Belongs to the peptidase M43B family.

It is found in the secreted. Secreted metalloproteinase that allows assimilation of proteinaceous substrates. Plays a pivotal role as a pathogenicity determinant during infections and contributes to the ability of the pathogen to persist within the mammalian host. This Arthroderma gypseum (strain ATCC MYA-4604 / CBS 118893) (Microsporum gypseum) protein is Extracellular metalloprotease MGYG_00389.